Here is a 611-residue protein sequence, read N- to C-terminus: Putative pentatricopeptide repeat-containing protein At1g56570 (611 aa).

PPR repeat units lie at residues 44-74 (HHILATNLIVSYFEKGLVEEARSLFDEMPDR), 75-109 (DVVAWTAMITGYASSNYNARAWECFHEMVKQGTSP), 110-144 (NEFTLSSVLKSCRNMKVLAYGALVHGVVVKLGMEG), 145-176 (SLYVDNAMMNMYATCSVTMEAACLIFRDIKVK), 177-211 (NDVTWTTLITGFTHLGDGIGGLKMYKQMLLENAEV), 212-246 (TPYCITIAVRASASIDSVTTGKQIHASVIKRGFQS), 247-281 (NLPVMNSILDLYCRCGYLSEAKHYFHEMEDKDLIT), 282-311 (WNTLISELERSDSSEALLMFQRFESQGFVP), 312-346 (NCYTFTSLVAACANIAALNCGQQLHGRIFRRGFNK), 347-377 (NVELANALIDMYAKCGNIPDSQRVFGEIVDR), 379-413 (NLVSWTSMMIGYGSHGYGAEAVELFDKMVSSGIRP), 414-444 (DRIVFMAVLSACRHAGLVEKGLKYFNVMESE), and 450-480 (DRDIYNCVVDLLGRAGKIGEAYELVERMPFK). Residues 485–561 (TWGAILGACK…EAGMSWILVE (77 aa)) form a type E motif region. Residues 562–592 (NQVFSFAVSDKMCPNASSVYSVLGLLIEETR) are type E(+) motif.

It belongs to the PPR family. PCMP-E subfamily.

This Arabidopsis thaliana (Mouse-ear cress) protein is Putative pentatricopeptide repeat-containing protein At1g56570 (PCMP-E64).